A 92-amino-acid polypeptide reads, in one-letter code: Cell division protein FtsB (92 aa).

Topologically, residues 1–3 are cytoplasmic; sequence MRL. The chain crosses the membrane as a helical span at residues 4-21; the sequence is FIFLLVAVLLLFQYDFWF. Residues 22–92 lie on the Periplasmic side of the membrane; the sequence is GKNGYLDYKR…IFYHIVKEQK (71 aa). A coiled-coil region spans residues 26-74; that stretch reads YLDYKRTAQQIAQHKQENEKLSQRNQVVAAEIKDLKQGVEAIEERARFQ.

Belongs to the FtsB family. Part of a complex composed of FtsB, FtsL and FtsQ.

The protein resides in the cell inner membrane. Essential cell division protein. May link together the upstream cell division proteins, which are predominantly cytoplasmic, with the downstream cell division proteins, which are predominantly periplasmic. In Pasteurella multocida (strain Pm70), this protein is Cell division protein FtsB.